Here is a 453-residue protein sequence, read N- to C-terminus: 4,4'-diapolycopene-4,4'-dial dehydrogenase (453 aa).

Residues 1 to 20 (MPDNDSHSLKSLPERQREDL) show a composition bias toward basic and acidic residues. A disordered region spans residues 1–23 (MPDNDSHSLKSLPERQREDLFSA). Catalysis depends on residues E215 and C249.

Belongs to the aldehyde dehydrogenase family.

It catalyses the reaction all-trans-4,4'-diapolycopene-4,4'-dial + 2 A + 2 H2O = all-trans-4,4'-diapolycopene-4,4'-dioate + 2 AH2 + 2 H(+). It participates in carotenoid biosynthesis. Involved in the biosynthesis of the major C30 carotenoid 4,4'-diapolycopene-4,4'-dioic acid, which protects B.firmus from peroxidative reactions. Catalyzes the oxidation of 4,4'-diapolycopene-4,4'-dial to yield 4,4'-diapolycopene-4,4'-dioic aci. The sequence is that of 4,4'-diapolycopene-4,4'-dial dehydrogenase from Cytobacillus firmus (Bacillus firmus).